The following is a 161-amino-acid chain: Putative pre-16S rRNA nuclease (161 aa).

Residues 142-161 form a disordered region; it reads AGSPPGALVPRNRVDPDRHA.

The protein belongs to the YqgF nuclease family.

The protein localises to the cytoplasm. Functionally, could be a nuclease involved in processing of the 5'-end of pre-16S rRNA. In Clavibacter sepedonicus (Clavibacter michiganensis subsp. sepedonicus), this protein is Putative pre-16S rRNA nuclease.